Reading from the N-terminus, the 278-residue chain is Translation initiation factor IF-3, mitochondrial (278 aa).

The N-terminal 31 residues, 1–31 (MAALFLKRLTLQTVKSENSCIRCFGKHILQK), are a transit peptide targeting the mitochondrion. The interval 249-278 (KAYKETQETQERDTLNKDHGNDKESNVLHQ) is disordered.

This sequence belongs to the IF-3 family.

Its subcellular location is the mitochondrion. Its function is as follows. IF-3 binds to the 28S ribosomal subunit and shifts the equilibrium between 55S ribosomes and their 39S and 28S subunits in favor of the free subunits, thus enhancing the availability of 28S subunits on which protein synthesis initiation begins. This is Translation initiation factor IF-3, mitochondrial (MTIF3) from Homo sapiens (Human).